A 95-amino-acid chain; its full sequence is Integration host factor subunit beta (95 aa).

This sequence belongs to the bacterial histone-like protein family. Heterodimer of an alpha and a beta chain.

Functionally, this protein is one of the two subunits of integration host factor, a specific DNA-binding protein that functions in genetic recombination as well as in transcriptional and translational control. The protein is Integration host factor subunit beta of Shewanella sp. (strain ANA-3).